Here is a 219-residue protein sequence, read N- to C-terminus: UPF0502 protein Swoo_2055 (219 aa).

A disordered region spans residues 167–195 (QVKGESVPISEHSRSQREAPSKRQDEMDE). A compositionally biased stretch (basic and acidic residues) spans 177 to 191 (EHSRSQREAPSKRQD).

The protein belongs to the UPF0502 family.

The polypeptide is UPF0502 protein Swoo_2055 (Shewanella woodyi (strain ATCC 51908 / MS32)).